Consider the following 232-residue polypeptide: Membrane steroid-binding protein 1 (232 aa).

A helical membrane pass occupies residues 25 to 45 (AAFFTAVAAAAALYHVVSGIF). 2 disordered regions span residues 48–77 (PPPPPPPRPRDEPEAEPLPPPVQLGEVSEE) and 172–232 (TVPV…AKES). A Cytochrome b5 heme-binding domain is found at 71 to 170 (LGEVSEEELR…GKYVKVGTVK (100 aa)). Residues 73–170 (EVSEEELRQY…GKYVKVGTVK (98 aa)) form a steroid-binding region. Positions 179–193 (APSTSPETTETAAAA) are enriched in low complexity. Positions 194–219 (EPEKAPATEEKPREVSSEEVKEKEDA) are enriched in basic and acidic residues.

Belongs to the cytochrome b5 family. MAPR subfamily. As to quaternary structure, interacts with SERL2. Expressed in leaf sheaths, leaf blades and panicles.

The protein resides in the cell membrane. Functionally, binds multiple steroid compounds. May act as a coreceptor with SERL2 and enhance its endocytosis. In Oryza sativa subsp. japonica (Rice), this protein is Membrane steroid-binding protein 1.